The sequence spans 112 residues: Urease subunit gamma (112 aa).

This sequence belongs to the urease gamma subunit family. In terms of assembly, heterotrimer of UreA (gamma), UreB (beta) and UreC (alpha) subunits. Three heterotrimers associate to form the active enzyme.

Its subcellular location is the cytoplasm. It catalyses the reaction urea + 2 H2O + H(+) = hydrogencarbonate + 2 NH4(+). The protein operates within nitrogen metabolism; urea degradation; CO(2) and NH(3) from urea (urease route): step 1/1. The protein is Urease subunit gamma of Gloeothece citriformis (strain PCC 7424) (Cyanothece sp. (strain PCC 7424)).